We begin with the raw amino-acid sequence, 855 residues long: Transcription factor gaf1 (855 aa).

Positions 72–112 (KNLTPNGDSNTLTPDTFSDPTAPSSAQSVPPTSSAETTADN) are enriched in polar residues. 6 disordered regions span residues 72–126 (KNLT…PAYS), 149–184 (TSFDESTAKSKKRSIADSHFPDPNAMQRPHDLESQP), 229–287 (SHNL…GFPS), 412–483 (PNSN…DMFS), 602–643 (NKNA…TRTT), and 680–768 (KKRN…SQSM). Residues 149–168 (TSFDESTAKSKKRSIADSHF) show a composition bias toward basic and acidic residues. The residue at position 150 (Ser-150) is a Phosphoserine. 2 stretches are compositionally biased toward low complexity: residues 240-250 (PANSNNSASPN) and 428-444 (NSSKSVGQGSSGVDSNQ). Over residues 445–476 (ENAESFNPSISSHNSAEWASGETTGHSSNSPL) the composition is skewed to polar residues. The segment covering 614–623 (AEDKKGDANT) has biased composition (basic and acidic residues). Composition is skewed to low complexity over residues 625–643 (RANATNPTPTCTNCQTRTT) and 707–717 (SKSSSAKSTAA). Residues 635-659 (CTNCQTRTTPLWRRSPDGQPLCNAC) form a GATA-type zinc finger. Phosphoserine occurs at positions 727 and 729. Over residues 755–767 (QQQSSENESKSQS) the composition is skewed to low complexity.

It localises to the nucleus. In terms of biological role, transcriptional activator. The polypeptide is Transcription factor gaf1 (gaf1) (Schizosaccharomyces pombe (strain 972 / ATCC 24843) (Fission yeast)).